The chain runs to 92 residues: Small ribosomal subunit protein bS20 (92 aa).

Belongs to the bacterial ribosomal protein bS20 family.

In terms of biological role, binds directly to 16S ribosomal RNA. The protein is Small ribosomal subunit protein bS20 of Methylacidiphilum infernorum (isolate V4) (Methylokorus infernorum (strain V4)).